The chain runs to 248 residues: MAGHSQFKNIMHKKGKQDAIRSKLFSKLAREITVAAKLGLPDPNMNARLRAAVIAARVENMPKDNIERAIKKASGADAENYDEVRYEGYGPGGVAVIVEALTDNRNRTAGEIRSYFTKVGGALAETGAVSFMFDHIGRIEFPAKVGSEEAMLEAAIEAGAEDVLSGEEGHEVLTSLEMLRDVALALEAKFGEPTRASLIWKPQNTISLDDETGEKVLRLIGLLEDNDDVQNVYANYEVSEAVLAKLEA.

Belongs to the TACO1 family.

It localises to the cytoplasm. The sequence is that of Probable transcriptional regulatory protein Msil_2305 from Methylocella silvestris (strain DSM 15510 / CIP 108128 / LMG 27833 / NCIMB 13906 / BL2).